The primary structure comprises 316 residues: Pantothenate kinase (316 aa).

95–102 lines the ATP pocket; it reads GSVAVGKS.

It belongs to the prokaryotic pantothenate kinase family.

The protein localises to the cytoplasm. It carries out the reaction (R)-pantothenate + ATP = (R)-4'-phosphopantothenate + ADP + H(+). It functions in the pathway cofactor biosynthesis; coenzyme A biosynthesis; CoA from (R)-pantothenate: step 1/5. The chain is Pantothenate kinase from Yersinia enterocolitica serotype O:8 / biotype 1B (strain NCTC 13174 / 8081).